A 416-amino-acid chain; its full sequence is MQIFEELESAVRSYSRGWPTIFEKAKGYKLWDIDGNMYIDFFAGAGALNYGHNHDTMQEKLIAYIQDDHIIHSLDMGTTPRKTFLETFHNTILKPRNLDYKIMFPGPTGTNTVESALKIARKVTGRDTVISFTNAFHGMTIGSLSVTGNSFKRHGAGVPLHHSVSMPYDKYVNDQDSIAYLERFLEDSGSGVALPAAIILETVQGEGGINAASIEWLQKIASICERWDILLIIDDVQAGCGRTGTFFSFEPAGIAPDIVCLSKSIGGIGLPMAITLIKPEYDQWGPGEHNGTFRGNNLAFIAATEALTAFWQDNTFSKSIIQKSKLVRQRIDRIIDKFPSLQGEARGRGLMQGIVIPEPNCASEICKAAFDIGLIVETSGPNDEVVKFLPPLIIDKEGINQGFDILEVSMEHVLKK.

Lys-263 carries the post-translational modification N6-(pyridoxal phosphate)lysine.

It belongs to the class-III pyridoxal-phosphate-dependent aminotransferase family. Pyridoxal 5'-phosphate is required as a cofactor.

It carries out the reaction L-2,4-diaminobutanoate + 2-oxoglutarate = L-aspartate 4-semialdehyde + L-glutamate. The protein operates within amine and polyamine biosynthesis; ectoine biosynthesis; L-ectoine from L-aspartate 4-semialdehyde: step 1/3. Functionally, catalyzes reversively the conversion of L-aspartate beta-semialdehyde (ASA) to L-2,4-diaminobutyrate (DABA) by transamination with L-glutamate. This Virgibacillus pantothenticus protein is Diaminobutyrate--2-oxoglutarate transaminase (ectB).